The sequence spans 547 residues: Chaperonin GroEL (547 aa).

Residues 30 to 33 (TLGP), Lys51, 87 to 91 (DGTTT), Gly415, and Asp496 each bind ATP.

This sequence belongs to the chaperonin (HSP60) family. Forms a cylinder of 14 subunits composed of two heptameric rings stacked back-to-back. Interacts with the co-chaperonin GroES.

The protein resides in the cytoplasm. The catalysed reaction is ATP + H2O + a folded polypeptide = ADP + phosphate + an unfolded polypeptide.. Together with its co-chaperonin GroES, plays an essential role in assisting protein folding. The GroEL-GroES system forms a nano-cage that allows encapsulation of the non-native substrate proteins and provides a physical environment optimized to promote and accelerate protein folding. This Chlorobaculum parvum (strain DSM 263 / NCIMB 8327) (Chlorobium vibrioforme subsp. thiosulfatophilum) protein is Chaperonin GroEL.